Reading from the N-terminus, the 470-residue chain is Glucose-1-phosphate adenylyltransferase (470 aa).

Alpha-D-glucose 1-phosphate is bound by residues glycine 165, 182–183 (EK), and serine 200.

This sequence belongs to the bacterial/plant glucose-1-phosphate adenylyltransferase family. Homotetramer.

The catalysed reaction is alpha-D-glucose 1-phosphate + ATP + H(+) = ADP-alpha-D-glucose + diphosphate. It participates in glycan biosynthesis; glycogen biosynthesis. Functionally, involved in the biosynthesis of ADP-glucose, a building block required for the elongation reactions to produce glycogen. Catalyzes the reaction between ATP and alpha-D-glucose 1-phosphate (G1P) to produce pyrophosphate and ADP-Glc. This is Glucose-1-phosphate adenylyltransferase from Paenarthrobacter aurescens (strain TC1).